The chain runs to 407 residues: Substance-P receptor (407 aa).

Residues 1-31 (MDNVLPMDSDLFPNISTNTSESNQFVQPTWQ) lie on the Extracellular side of the membrane. N-linked (GlcNAc...) asparagine glycosylation is found at Asn-14 and Asn-18. The chain crosses the membrane as a helical span at residues 32–54 (IVLWAAAYTVIVVTSVVGNVVVI). Topologically, residues 55-64 (WIILAHKRMR) are cytoplasmic. Residues 65–86 (TVTNYFLVNLAFAEACMAAFNT) traverse the membrane as a helical segment. Over 87–106 (VVNFTYAVHNVWYYGLFYCK) the chain is Extracellular. A disulfide bridge connects residues Cys-105 and Cys-180. Residues 107-128 (FHNFFPIAALFASIYSMTAVAF) form a helical membrane-spanning segment. At 129 to 148 (DRYMAIIHPLQPRLSATATK) the chain is on the cytoplasmic side. The helical transmembrane segment at 149 to 169 (VVIFVIWVLALLLAFPQGYYS) threads the bilayer. Over 170 to 194 (TTETMPSRVVCMIEWPEHPNRTYEK) the chain is Extracellular. Residues 195–219 (AYHICVTVLIYFLPLLVIGYAYTVV) form a helical membrane-spanning segment. Residues 220-248 (GITLWASEIPGDSSDRYHEQVSAKRKVVK) lie on the Cytoplasmic side of the membrane. The chain crosses the membrane as a helical span at residues 249–270 (MMIVVVCTFAICWLPFHVFFLL). Over 271–283 (PYINPDLYLKKFI) the chain is Extracellular. The chain crosses the membrane as a helical span at residues 284–308 (QQVYLASMWLAMSSTMYNPIIYCCL). The Cytoplasmic portion of the chain corresponds to 309-407 (NDRFRLGFKH…SSSFYSNMLA (99 aa)). Cys-322 carries S-palmitoyl cysteine lipidation. The interval 362-407 (VGAHEEEPEEGPKATPSSLDLTSNGSSRSNSKTMTESSSFYSNMLA) is disordered. Polar residues predominate over residues 376–407 (TPSSLDLTSNGSSRSNSKTMTESSSFYSNMLA).

Belongs to the G-protein coupled receptor 1 family. As to quaternary structure, interacts with ARRB1.

The protein resides in the cell membrane. In terms of biological role, this is a receptor for the tachykinin neuropeptide substance P. It is probably associated with G proteins that activate a phosphatidylinositol-calcium second messenger system. The rank order of affinity of this receptor to tachykinins is: substance P &gt; substance K &gt; neuromedin-K. In Rattus norvegicus (Rat), this protein is Substance-P receptor (Tacr1).